We begin with the raw amino-acid sequence, 313 residues long: Ribosomal RNA small subunit methyltransferase H (313 aa).

S-adenosyl-L-methionine-binding positions include 35 to 37, aspartate 55, phenylalanine 80, aspartate 102, and glutamine 109; that span reads GGH.

It belongs to the methyltransferase superfamily. RsmH family.

It localises to the cytoplasm. It carries out the reaction cytidine(1402) in 16S rRNA + S-adenosyl-L-methionine = N(4)-methylcytidine(1402) in 16S rRNA + S-adenosyl-L-homocysteine + H(+). In terms of biological role, specifically methylates the N4 position of cytidine in position 1402 (C1402) of 16S rRNA. The sequence is that of Ribosomal RNA small subunit methyltransferase H from Shewanella baltica (strain OS223).